Here is a 186-residue protein sequence, read N- to C-terminus: dCTP deaminase (186 aa).

107 to 112 (KSTYAR) provides a ligand contact to dCTP. The Proton donor/acceptor role is filled by Glu133. DCTP-binding residues include Gln152, Tyr166, Lys175, and Gln176.

This sequence belongs to the dCTP deaminase family. Homotrimer.

The catalysed reaction is dCTP + H2O + H(+) = dUTP + NH4(+). It participates in pyrimidine metabolism; dUMP biosynthesis; dUMP from dCTP (dUTP route): step 1/2. In terms of biological role, catalyzes the deamination of dCTP to dUTP. In Wolinella succinogenes (strain ATCC 29543 / DSM 1740 / CCUG 13145 / JCM 31913 / LMG 7466 / NCTC 11488 / FDC 602W) (Vibrio succinogenes), this protein is dCTP deaminase.